We begin with the raw amino-acid sequence, 265 residues long: tRNA (guanine-N(7)-)-methyltransferase (265 aa).

The segment at 1–40 (MIHDDDPNAPGAPHDDDATAAPASATRAAPAAGDDDDANP) is disordered. Residues 19-32 (TAAPASATRAAPAA) show a composition bias toward low complexity. S-adenosyl-L-methionine-binding residues include Glu95, Glu120, Asp147, and Asp170. Residue Asp170 is part of the active site. Substrate-binding positions include Lys174, Asp206, and 241 to 244 (TKFE).

Belongs to the class I-like SAM-binding methyltransferase superfamily. TrmB family.

The enzyme catalyses guanosine(46) in tRNA + S-adenosyl-L-methionine = N(7)-methylguanosine(46) in tRNA + S-adenosyl-L-homocysteine. Its pathway is tRNA modification; N(7)-methylguanine-tRNA biosynthesis. Catalyzes the formation of N(7)-methylguanine at position 46 (m7G46) in tRNA. The chain is tRNA (guanine-N(7)-)-methyltransferase from Burkholderia pseudomallei (strain 1710b).